A 279-amino-acid polypeptide reads, in one-letter code: Phosphatidylglycerol--prolipoprotein diacylglyceryl transferase (279 aa).

Helical transmembrane passes span 25-45, 60-80, 103-123, 133-153, 181-201, 209-229, and 236-256; these read WYGL…KFFV, YFIW…ILIY, FVGI…IATI, LWSL…FGRI, PSQL…LYFY, GELI…TEFL, and IGYF…MLIL. R152 is a binding site for a 1,2-diacyl-sn-glycero-3-phospho-(1'-sn-glycerol).

This sequence belongs to the Lgt family.

The protein localises to the cell inner membrane. It catalyses the reaction L-cysteinyl-[prolipoprotein] + a 1,2-diacyl-sn-glycero-3-phospho-(1'-sn-glycerol) = an S-1,2-diacyl-sn-glyceryl-L-cysteinyl-[prolipoprotein] + sn-glycerol 1-phosphate + H(+). It participates in protein modification; lipoprotein biosynthesis (diacylglyceryl transfer). Catalyzes the transfer of the diacylglyceryl group from phosphatidylglycerol to the sulfhydryl group of the N-terminal cysteine of a prolipoprotein, the first step in the formation of mature lipoproteins. In Campylobacter hominis (strain ATCC BAA-381 / DSM 21671 / CCUG 45161 / LMG 19568 / NCTC 13146 / CH001A), this protein is Phosphatidylglycerol--prolipoprotein diacylglyceryl transferase.